Consider the following 334-residue polypeptide: Beta-hexosaminidase (334 aa).

Substrate is bound by residues Asp60, Arg68, Arg133, and 163–164 (KH). His176 serves as the catalytic Proton donor/acceptor. Asp247 (nucleophile) is an active-site residue.

The protein belongs to the glycosyl hydrolase 3 family. NagZ subfamily.

It localises to the cytoplasm. The enzyme catalyses Hydrolysis of terminal non-reducing N-acetyl-D-hexosamine residues in N-acetyl-beta-D-hexosaminides.. Its pathway is cell wall biogenesis; peptidoglycan recycling. Functionally, plays a role in peptidoglycan recycling by cleaving the terminal beta-1,4-linked N-acetylglucosamine (GlcNAc) from peptide-linked peptidoglycan fragments, giving rise to free GlcNAc, anhydro-N-acetylmuramic acid and anhydro-N-acetylmuramic acid-linked peptides. This chain is Beta-hexosaminidase, found in Xanthomonas euvesicatoria pv. vesicatoria (strain 85-10) (Xanthomonas campestris pv. vesicatoria).